A 343-amino-acid polypeptide reads, in one-letter code: Phosphoribosylformylglycinamidine cyclo-ligase (343 aa).

Belongs to the AIR synthase family.

The protein localises to the cytoplasm. It carries out the reaction 2-formamido-N(1)-(5-O-phospho-beta-D-ribosyl)acetamidine + ATP = 5-amino-1-(5-phospho-beta-D-ribosyl)imidazole + ADP + phosphate + H(+). It participates in purine metabolism; IMP biosynthesis via de novo pathway; 5-amino-1-(5-phospho-D-ribosyl)imidazole from N(2)-formyl-N(1)-(5-phospho-D-ribosyl)glycinamide: step 2/2. This chain is Phosphoribosylformylglycinamidine cyclo-ligase, found in Rippkaea orientalis (strain PCC 8801 / RF-1) (Cyanothece sp. (strain PCC 8801)).